The chain runs to 357 residues: Chorismate synthase (357 aa).

Residue R47 participates in NADP(+) binding. FMN-binding positions include 123-125, G281, 296-300, and R324; these read RAS and KPTSS.

The protein belongs to the chorismate synthase family. As to quaternary structure, homotetramer. It depends on FMNH2 as a cofactor.

It carries out the reaction 5-O-(1-carboxyvinyl)-3-phosphoshikimate = chorismate + phosphate. The protein operates within metabolic intermediate biosynthesis; chorismate biosynthesis; chorismate from D-erythrose 4-phosphate and phosphoenolpyruvate: step 7/7. Catalyzes the anti-1,4-elimination of the C-3 phosphate and the C-6 proR hydrogen from 5-enolpyruvylshikimate-3-phosphate (EPSP) to yield chorismate, which is the branch point compound that serves as the starting substrate for the three terminal pathways of aromatic amino acid biosynthesis. This reaction introduces a second double bond into the aromatic ring system. This Chlamydia trachomatis serovar A (strain ATCC VR-571B / DSM 19440 / HAR-13) protein is Chorismate synthase.